The chain runs to 260 residues: Snake venom serine protease pallabin-2 (260 aa).

The signal sequence occupies residues 1 to 18 (MVLIKVLANLLILQLSYA). Positions 19–24 (QKSSEL) are excised as a propeptide. A Peptidase S1 domain is found at 25-251 (IIGGDECNIN…HLDWIENIIA (227 aa)). 6 cysteine pairs are disulfide-bonded: cysteine 31–cysteine 163, cysteine 50–cysteine 66, cysteine 98–cysteine 258, cysteine 142–cysteine 212, cysteine 174–cysteine 191, and cysteine 202–cysteine 227. Histidine 65 acts as the Charge relay system in catalysis. The N-linked (GlcNAc...) asparagine glycan is linked to asparagine 103. Catalysis depends on aspartate 110, which acts as the Charge relay system. Serine 206 serves as the catalytic Charge relay system.

The protein belongs to the peptidase S1 family. Snake venom subfamily. Monomer. In terms of tissue distribution, expressed by the venom gland.

The protein localises to the secreted. In terms of biological role, snake venom serine protease that may act in the hemostasis system of the prey. The polypeptide is Snake venom serine protease pallabin-2 (JZTHR7) (Gloydius halys (Chinese water mocassin)).